Here is a 220-residue protein sequence, read N- to C-terminus: MKLNKYIDHTLLKQDAKKKQIDSLLSEAREYDFASVCVNPTWVEHAKKGLEGTDVKVCTVVGFPLGATTSAVKAFETKEAIQNGADEIDMVINVGALKSGNLALVESDIRAVVEASGDKLVKVIIEACLLTDQEKVVVCQLAQKAGADFVKTSTGFSTGGATIADVTLMRETVGSDMGVKAAGGARSYADALAFVEAGATRIGTSAGVAILKGELADGDY.

Residue Asp-89 is the Proton donor/acceptor of the active site. Lys-151 functions as the Schiff-base intermediate with acetaldehyde in the catalytic mechanism. Lys-180 functions as the Proton donor/acceptor in the catalytic mechanism.

This sequence belongs to the DeoC/FbaB aldolase family. DeoC type 1 subfamily.

It localises to the cytoplasm. The catalysed reaction is 2-deoxy-D-ribose 5-phosphate = D-glyceraldehyde 3-phosphate + acetaldehyde. Its pathway is carbohydrate degradation; 2-deoxy-D-ribose 1-phosphate degradation; D-glyceraldehyde 3-phosphate and acetaldehyde from 2-deoxy-alpha-D-ribose 1-phosphate: step 2/2. Functionally, catalyzes a reversible aldol reaction between acetaldehyde and D-glyceraldehyde 3-phosphate to generate 2-deoxy-D-ribose 5-phosphate. This Streptococcus pneumoniae serotype 4 (strain ATCC BAA-334 / TIGR4) protein is Deoxyribose-phosphate aldolase.